The following is a 30-amino-acid chain: Fibrinogen (30 aa).

Homodimer. As to expression, secreted into the hemolymph.

The protein resides in the secreted. Its subcellular location is the extracellular space. Functionally, clotting protein. The polypeptide is Fibrinogen (Panulirus interruptus (California spiny lobster)).